Reading from the N-terminus, the 812-residue chain is Mitochondrial intermediate peptidase (812 aa).

The transit peptide at methionine 1–serine 29 directs the protein to the mitochondrion. The tract at residues proline 19 to aspartate 49 is disordered. Low complexity predominate over residues serine 37–serine 46. Zn(2+) is bound at residue histidine 595. Glutamate 596 is a catalytic residue. The Zn(2+) site is built by histidine 599 and histidine 602.

Belongs to the peptidase M3 family. Zn(2+) is required as a cofactor.

The protein resides in the mitochondrion matrix. The enzyme catalyses Release of an N-terminal octapeptide as second stage of processing of some proteins imported into the mitochondrion.. Its function is as follows. Cleaves proteins, imported into the mitochondrion, to their mature size. While most mitochondrial precursor proteins are processed to the mature form in one step by mitochondrial processing peptidase (MPP), the sequential cleavage by MIP of an octapeptide after initial processing by MPP is a required step for a subgroup of nuclear-encoded precursor proteins destined for the matrix or the inner membrane. This Scheffersomyces stipitis (strain ATCC 58785 / CBS 6054 / NBRC 10063 / NRRL Y-11545) (Yeast) protein is Mitochondrial intermediate peptidase (OCT1).